Here is a 609-residue protein sequence, read N- to C-terminus: All-trans-retinol 13,14-reductase (609 aa).

Positions 1 to 21 are cleaved as a signal peptide; that stretch reads MWITALLLVVLLLVVVHRVYV.

The protein belongs to the carotenoid/retinoid oxidoreductase family. CrtISO subfamily. The cofactor is NAD(+). NADP(+) serves as cofactor. FAD is required as a cofactor. As to expression, highly expressed in liver, kidney and heart.

It localises to the endoplasmic reticulum membrane. The enzyme catalyses all-trans-13,14-dihydroretinol + A = all-trans-retinol + AH2. In terms of biological role, catalyzes the saturation of all-trans-retinol to all-trans-13,14-dihydroretinol. Does not exhibit any activity toward all-trans-retinoic acid, nor 9-cis, 11-cis or 13-cis-retinol isomers. May play a role in the metabolism of vitamin A. Independently of retinol conversion, may regulate liver metabolism upstream of MLXIPL/ChREBP. May play a role in adipocyte differentiation. The protein is All-trans-retinol 13,14-reductase (Retsat) of Rattus norvegicus (Rat).